A 148-amino-acid chain; its full sequence is Hemoglobin subunit beta-B (148 aa).

Residues 3 to 148 (DWTDAERAAI…VVSALGRQYH (146 aa)) form the Globin domain. His64 and His93 together coordinate heme b.

This sequence belongs to the globin family. Heterotetramer of two alpha chains and two beta chains. Red blood cells.

Its function is as follows. Involved in oxygen transport from gills to the various peripheral tissues. The polypeptide is Hemoglobin subunit beta-B (hbb2) (Seriola quinqueradiata (Five-ray yellowtail)).